An 80-amino-acid chain; its full sequence is U-scoloptoxin(15)-Er1a (80 aa).

Residues Met1–Ser22 form the signal peptide.

Belongs to the scoloptoxin-15 family. In terms of processing, contains 2 disulfide bonds. As to expression, expressed by the venom gland.

The protein localises to the secreted. This chain is U-scoloptoxin(15)-Er1a, found in Ethmostigmus rubripes (Giant centipede).